Here is a 155-residue protein sequence, read N- to C-terminus: SsrA-binding protein (155 aa).

A disordered region spans residues 135–155 (KRQDIKQRDVERETRREIMRH).

It belongs to the SmpB family.

The protein resides in the cytoplasm. Its function is as follows. Required for rescue of stalled ribosomes mediated by trans-translation. Binds to transfer-messenger RNA (tmRNA), required for stable association of tmRNA with ribosomes. tmRNA and SmpB together mimic tRNA shape, replacing the anticodon stem-loop with SmpB. tmRNA is encoded by the ssrA gene; the 2 termini fold to resemble tRNA(Ala) and it encodes a 'tag peptide', a short internal open reading frame. During trans-translation Ala-aminoacylated tmRNA acts like a tRNA, entering the A-site of stalled ribosomes, displacing the stalled mRNA. The ribosome then switches to translate the ORF on the tmRNA; the nascent peptide is terminated with the 'tag peptide' encoded by the tmRNA and targeted for degradation. The ribosome is freed to recommence translation, which seems to be the essential function of trans-translation. In Oleidesulfovibrio alaskensis (strain ATCC BAA-1058 / DSM 17464 / G20) (Desulfovibrio alaskensis), this protein is SsrA-binding protein.